Here is a 297-residue protein sequence, read N- to C-terminus: Ribosomal RNA small subunit methyltransferase H (297 aa).

S-adenosyl-L-methionine-binding positions include 37 to 39 (GGH), Glu-56, Phe-87, Asp-102, and His-109.

Belongs to the methyltransferase superfamily. RsmH family.

Its subcellular location is the cytoplasm. It carries out the reaction cytidine(1402) in 16S rRNA + S-adenosyl-L-methionine = N(4)-methylcytidine(1402) in 16S rRNA + S-adenosyl-L-homocysteine + H(+). In terms of biological role, specifically methylates the N4 position of cytidine in position 1402 (C1402) of 16S rRNA. This Borrelia recurrentis (strain A1) protein is Ribosomal RNA small subunit methyltransferase H.